Reading from the N-terminus, the 265-residue chain is Mlc titration factor A (265 aa).

4 residues coordinate Zn(2+): His-111, His-148, His-152, and Glu-211.

It belongs to the MtfA family. As to quaternary structure, monomer in solution. Interacts with Mlc. It depends on Zn(2+) as a cofactor.

The protein localises to the cytoplasm. Its activity is regulated as follows. Association between Mlc and MtfA may induce structural changes that activate the peptidase activity of MtfA while inactivating the DNA-binding ability of Mlc. The aminopeptidase activity is partially inhibited by metal chelators such as EDTA and phenantroline, but not by inhibitors for serine-, aspartyl-, or cysteine-proteases. Functionally, involved in the modulation of the activity of the glucose-phosphotransferase system (glucose-PTS). Interacts with the transcriptional repressor Mlc, preventing its interaction with DNA and leading to the modulation of expression of genes regulated by Mlc, including ptsG, which encodes the PTS system glucose-specific EIICB component. Shows zinc-dependent metallopeptidase activity. In vitro, can cleave several artificial substrates. The highest activity is observed for L-alanine fused to 4-nitroanilide (L-alanine-pNA). Shows lower activity towards proline-pNA and valine-pNA. This is Mlc titration factor A from Klebsiella pneumoniae subsp. pneumoniae (strain ATCC 700721 / MGH 78578).